The following is a 163-amino-acid chain: uncharacterized protein (163 aa).

Expressed in keratinocytes.

This is an uncharacterized protein from Homo sapiens (Human).